Consider the following 365-residue polypeptide: WAT1-related protein At1g01070 (365 aa).

10 helical membrane-spanning segments follow: residues 14 to 34, 46 to 66, 83 to 103, 107 to 127, 139 to 159, 189 to 209, 221 to 241, 255 to 275, 285 to 305, and 310 to 330; these read YSPVIVMVMSNVAMGSVNALV, VIGAYRMAISALILVPFAYVL, FVSGLLGASLMQFFFLLGLSY, TVSCALVSMLPAITFALALIF, AGMLKVIGTLICISGALFLTF, WLLGCLYLTIGTVLLSLWMLF, YSSTCLMSIFAAFQCALLSLY, FVITVIIYAGVVGQAMTTVAT, VFASAFFPLTLISATLFDFLI, and LYLGSVIGSLVTITGLYMFLW. Residues 27–157 form the EamA 1 domain; the sequence is MGSVNALVKK…LICISGALFL (131 aa). The EamA 2 domain occupies 223 to 329; sequence STCLMSIFAA…VTITGLYMFL (107 aa). A compositionally biased stretch (polar residues) spans 340–356; it reads TALSSGMDNEAQYTTPN. Residues 340-365 form a disordered region; it reads TALSSGMDNEAQYTTPNKDNDSKSPV.

It belongs to the drug/metabolite transporter (DMT) superfamily. Plant drug/metabolite exporter (P-DME) (TC 2.A.7.4) family.

It is found in the membrane. This Arabidopsis thaliana (Mouse-ear cress) protein is WAT1-related protein At1g01070.